A 930-amino-acid polypeptide reads, in one-letter code: Isoleucine--tRNA ligase (930 aa).

Positions 57-67 match the 'HIGH' region motif; sequence PYANGNIHVGH. E554 serves as a coordination point for L-isoleucyl-5'-AMP. The 'KMSKS' region motif lies at 595-599; that stretch reads KMSKS. ATP is bound at residue K598. Positions 888, 891, 908, and 911 each coordinate Zn(2+).

The protein belongs to the class-I aminoacyl-tRNA synthetase family. IleS type 1 subfamily. As to quaternary structure, monomer. It depends on Zn(2+) as a cofactor.

Its subcellular location is the cytoplasm. It catalyses the reaction tRNA(Ile) + L-isoleucine + ATP = L-isoleucyl-tRNA(Ile) + AMP + diphosphate. Functionally, catalyzes the attachment of isoleucine to tRNA(Ile). As IleRS can inadvertently accommodate and process structurally similar amino acids such as valine, to avoid such errors it has two additional distinct tRNA(Ile)-dependent editing activities. One activity is designated as 'pretransfer' editing and involves the hydrolysis of activated Val-AMP. The other activity is designated 'posttransfer' editing and involves deacylation of mischarged Val-tRNA(Ile). This is Isoleucine--tRNA ligase from Streptococcus gordonii (strain Challis / ATCC 35105 / BCRC 15272 / CH1 / DL1 / V288).